Here is a 167-residue protein sequence, read N- to C-terminus: Mitochondrial fission 1 protein B (167 aa).

Residues 92-125 (REKLYLLALGYYRSGDFSRSRDCIERCLEVEPES) form a TPR repeat. The chain crosses the membrane as a helical span at residues 144–164 (VIGVGIAVTAVGVVAGIAAAI).

This sequence belongs to the FIS1 family. In terms of assembly, interacts with PEX11A, PEX11B, PEX11C, PEX11D and PEX11E.

It localises to the mitochondrion outer membrane. The protein resides in the peroxisome membrane. Component of the peroxisomal and mitochondrial division machineries. Plays a role in promoting the fission of mitochondria and peroxisomes. In association with PEX11C, PEX11D, PEX11E and DRP3A, is involved in cell cycle-associated constitutive self-replication of preexisting peroxisomes. This is Mitochondrial fission 1 protein B (FIS1B) from Arabidopsis thaliana (Mouse-ear cress).